A 379-amino-acid polypeptide reads, in one-letter code: MSSAKTRLFLTIEKLKNSMDDPQMTYPFWEKFFPLLGNSTTITLELSTLSEMINEAAETAEQLIVTQGGVVYSQYVQNATNTSGTNNNMVNRRLLVPPISTATPVLQPLEIKKYHNFAEKIASYFVSASVQSSMYTVKDVVKLYLYLSHLPKFKPLFSLLEEALFTKQRNCVPAVTSDKLILILDNLRDLTVITNFRLDNEAVSLMLNNIQIVLNNELSKYPVVKVKDFISTSNVYEKEVEPFKAFGDKFELLVAQKSSHLVLSSENTLLFNSNPIIVENIAASIEYNCDINRMVYNSINNIFINSVEQSAAENIKFDVDDYNRRYRVLDRIRENLRNNYIEKVAVGDISSKKRITNNPTTIPPITLKKRRTSNLLIED.

This is an uncharacterized protein from Tortricidae (ClGV).